Here is a 198-residue protein sequence, read N- to C-terminus: (S)-2-hydroxypropylphosphonic acid epoxidase (198 aa).

Positions 15–70 (LKDRREQVKMDHAALASLLGETPETVAAWENGEGGELTLTQLGRIAHVLGTSIGAL) constitute an HTH cro/C1-type domain. Lys-23 contacts substrate. A DNA-binding region (H-T-H motif) is located at residues 26-45 (HAALASLLGETPETVAAWEN). Substrate contacts are provided by residues Arg-97, Tyr-105, 135–138 (NSGH), and Glu-142. Residues 136-196 (SGHAGNEFLF…GTGSAKLIAV (61 aa)) enclose the Cupin type-2 domain. Fe cation contacts are provided by His-138, Glu-142, and His-180.

This sequence belongs to the non-heme iron-dependent dioxygenase family. Homotetramer. Fe(2+) is required as a cofactor.

The catalysed reaction is (S)-2-hydroxypropylphosphonate + H2O2 = (1R,2S)-epoxypropylphosphonate + 2 H2O. It functions in the pathway antibiotic biosynthesis; fosfomycin biosynthesis. Non-heme-dependent dioxygenase that catalyzes the oxidative epoxidation of (S)-2-hydroxypropylphosphonate into (1R,2S)-epoxypropylphosphonate, the final step in the biosynthesis of fosfomycin antibiotic. In Streptomyces wedmorensis, this protein is (S)-2-hydroxypropylphosphonic acid epoxidase (hppE).